A 93-amino-acid polypeptide reads, in one-letter code: Acylphosphatase (93 aa).

The Acylphosphatase-like domain occupies 6 to 93 (RAHILVSGEV…GDLGPFSVRH (88 aa)). Residues arginine 21 and asparagine 39 contribute to the active site.

This sequence belongs to the acylphosphatase family.

It catalyses the reaction an acyl phosphate + H2O = a carboxylate + phosphate + H(+). This chain is Acylphosphatase (acyP), found in Anaeromyxobacter sp. (strain Fw109-5).